We begin with the raw amino-acid sequence, 382 residues long: Mannitol-1-phosphate 5-dehydrogenase (382 aa).

Residue 3-14 coordinates NAD(+); that stretch reads VLHFGAGNIGRG.

Belongs to the mannitol dehydrogenase family.

It carries out the reaction D-mannitol 1-phosphate + NAD(+) = beta-D-fructose 6-phosphate + NADH + H(+). This chain is Mannitol-1-phosphate 5-dehydrogenase, found in Sodalis glossinidius (strain morsitans).